The sequence spans 623 residues: uncharacterized protein (623 aa).

The next 5 helical transmembrane spans lie at 242–262 (IALALMILALLLGLRKLITWL), 288–308 (IVSPVSVFLALFSCDVALDIF), 318–338 (VSMWVGAVYIMLLAWLVIALF), 361–381 (VINLILKVVYFLIFIVALLGV), and 387–407 (FNVSAIIASLGIGGLAVALAV).

The protein belongs to the MscS (TC 1.A.23) family.

Its subcellular location is the cell membrane. This is an uncharacterized protein from Helicobacter pylori (strain J99 / ATCC 700824) (Campylobacter pylori J99).